The primary structure comprises 299 residues: B3 domain-containing transcription factor NGA2 (299 aa).

Residues 1-21 (MNQEDKEKPIEEASSSMEREH) form a disordered region. The segment at residues 23–129 (FDKVVTPSDV…KLYIDWRRRP (107 aa)) is a DNA-binding region (TF-B3). The disordered stretch occupies residues 226-249 (GGGGSVNSTEEESSSSGGSIPRGR).

It localises to the nucleus. Its function is as follows. Regulates lateral organ growth. Functionally redundant with NGA1, NGA3 and NGA4. This Arabidopsis thaliana (Mouse-ear cress) protein is B3 domain-containing transcription factor NGA2 (NGA2).